Consider the following 612-residue polypeptide: uncharacterized protein (612 aa).

Residues 213 to 238 (ASAEDGEEAAAGAGKRQVARSGARKR) are disordered. The region spanning 421–610 (DLACLLLADL…ERLLQLYRRL (190 aa)) is the VWFA domain.

The protein localises to the cytoplasm. Functionally, component of the anaerobic respiratory chain that transforms nitrate to dinitrogen (denitrification). Function unknown, but essential for the denitrification process. This is an uncharacterized protein from Pseudomonas aeruginosa (strain ATCC 15692 / DSM 22644 / CIP 104116 / JCM 14847 / LMG 12228 / 1C / PRS 101 / PAO1).